Here is a 495-residue protein sequence, read N- to C-terminus: uncharacterized protein (495 aa).

12 consecutive transmembrane segments (helical) span residues 43-63 (IIIS…MPSI), 75-95 (TLVV…PLIF), 106-126 (PLNI…ALSV), 128-148 (LAMF…GLGI), 168-188 (IYFL…GFIA), 196-216 (WEFW…VVFL), 284-304 (PIMI…YLLF), 323-343 (GLTY…LLPL), 366-386 (PMAF…GWTV), 390-410 (VFWF…VMTF), 426-446 (ASAM…FPLF), and 461-481 (SLLA…YMFG).

The protein belongs to the major facilitator superfamily. CAR1 family.

The protein localises to the membrane. This is an uncharacterized protein from Schizosaccharomyces pombe (strain 972 / ATCC 24843) (Fission yeast).